The sequence spans 85 residues: Transcription factor 4 (85 aa).

The 54-residue stretch at 7–60 folds into the bHLH domain; it reads ERRMANNARERLRVRDINEAFKELGRMVQLHLKSDKPQTKLLILHQAVAVILSL. Residues 62 to 85 are class A specific domain; the sequence is QQVRERNLNPKAACLKRREEEKVS.

In terms of assembly, efficient DNA binding requires dimerization with another bHLH protein. Forms homo- or heterooligomers with myogenin.

Its subcellular location is the nucleus. Its function is as follows. Transcription factor that binds to the immunoglobulin enhancer Mu-E5/KE5-motif. Involved in the initiation of neuronal differentiation. Binds to the E-box present in the somatostatin receptor 2 initiator element (SSTR2-INR) to activate transcription. In Gallus gallus (Chicken), this protein is Transcription factor 4 (TCF4).